Consider the following 145-residue polypeptide: Ribonuclease P protein component (145 aa).

Residues 120-130 (LPAAPGTMPPA) are compositionally biased toward low complexity. The disordered stretch occupies residues 120–145 (LPAAPGTMPPARTMHPSSLSPTEPDL). Over residues 134 to 145 (HPSSLSPTEPDL) the composition is skewed to polar residues.

The protein belongs to the RnpA family. Consists of a catalytic RNA component (M1 or rnpB) and a protein subunit.

It catalyses the reaction Endonucleolytic cleavage of RNA, removing 5'-extranucleotides from tRNA precursor.. Functionally, RNaseP catalyzes the removal of the 5'-leader sequence from pre-tRNA to produce the mature 5'-terminus. It can also cleave other RNA substrates such as 4.5S RNA. The protein component plays an auxiliary but essential role in vivo by binding to the 5'-leader sequence and broadening the substrate specificity of the ribozyme. This chain is Ribonuclease P protein component, found in Xanthomonas oryzae pv. oryzae (strain MAFF 311018).